A 218-amino-acid chain; its full sequence is Twisted gastrulation protein homolog 1-B (218 aa).

Positions 1 to 25 (MKPSFLHIPAAALLLCSLWILPIHC) are cleaved as a signal peptide. Asparagine 52, asparagine 81, and asparagine 147 each carry an N-linked (GlcNAc...) asparagine glycan.

It belongs to the twisted gastrulation protein family. Binds directly to bmp2, bmp4 and bmp7 and can form a ternary complex with bmps and chordin, thus preventing the binding of bmps to their cell surface receptors.

It localises to the secreted. Involved in dorsal-ventral patterning, permitting peak BMP signaling by antagonizing the residual anti-BMP activity of the cleavage products of chrd. Functions to promote the formation of ventral mesoderm by increasing the activity of bmp7 and other BMPS. Seems to antagonize BMP signaling by forming ternary complexes with chrd and BMPs, thereby preventing BMPs from binding to their receptors. In addition to the anti-BMP function, also has pro-BMP activity, partly mediated by cleavage and degradation of chrd, which releases BMPs from ternary complexes. May be an important modulator of BMP-regulated cartilage development and chondrocyte differentiation. This Xenopus laevis (African clawed frog) protein is Twisted gastrulation protein homolog 1-B (twsg1-b).